Reading from the N-terminus, the 156-residue chain is Anaerobic nitrite reductase HB2 (156 aa).

The 150-residue stretch at 2–151 folds into the Globin domain; the sequence is GFTDKQEALV…LASAIKAEMH (150 aa). The Homodimerization motif lies at 35–39; that stretch reads EIAPV. Residues Ser45, Lys59, His63, and His98 each contribute to the heme b site. Positions 105–117 match the Homodimerization motif; it reads DPHFEVVKEALLR.

This sequence belongs to the plant globin family. As to quaternary structure, homodimer. Heme b is required as a cofactor.

It localises to the cytoplasm. The protein resides in the nucleus. It catalyses the reaction Fe(III)-heme b-[protein] + nitric oxide + H2O = Fe(II)-heme b-[protein] + nitrite + 2 H(+). In terms of biological role, phytoglobin that reduces nitrite to nitric oxide (NO) under anoxic conditions (e.g. during flooding or in waterlogged soil). May not function as an oxygen storage or transport protein. Has an unusually high affinity for O(2) through an hexacoordinate heme iron because of a very low dissociation constant. The sequence is that of Anaerobic nitrite reductase HB2 from Solanum lycopersicum (Tomato).